A 265-amino-acid polypeptide reads, in one-letter code: Urease accessory protein UreH (265 aa).

This sequence belongs to the UreD family. As to quaternary structure, ureH, UreF and UreG form a complex that acts as a GTP-hydrolysis-dependent molecular chaperone, activating the urease apoprotein by helping to assemble the nickel containing metallocenter of UreC. The UreE protein probably delivers the nickel.

The protein localises to the cytoplasm. Functionally, required for maturation of urease via the functional incorporation of the urease nickel metallocenter. In Helicobacter pylori (strain HPAG1), this protein is Urease accessory protein UreH.